The following is a 60-amino-acid chain: Bowman-Birk type proteinase inhibitor C1 (60 aa).

Cystine bridges form between Cys5-Cys21, Cys11-Cys19, Cys28-Cys35, and Cys32-Cys49.

This sequence belongs to the Bowman-Birk serine protease inhibitor family. As to expression, expressed in bulb (at protein level).

In terms of biological role, serine protease inhibitor. Strongly inhibits trypsin (Ki = 0.22 nM) and very weakly inhibits chymotrypsin (Ki = 1200 nM). Does not inhibit bacterial subtilisin. The polypeptide is Bowman-Birk type proteinase inhibitor C1 (Hyacinthus orientalis (Common hyacinth)).